Consider the following 1043-residue polypeptide: Integrator complex subunit 3 (1043 aa).

Met-1 carries the N-acetylmethionine modification. Residues Ser-502, Ser-537, and Ser-995 each carry the phosphoserine modification. Residues 977 to 1043 are disordered; the sequence is YEDSSTKPPK…GSSAVGSDSD (67 aa). The span at 1008 to 1022 shows a compositional bias: acidic residues; that stretch reads AEEESGSSSASEEED.

The protein belongs to the Integrator subunit 3 family. In terms of assembly, component of the Integrator complex, composed of core subunits INTS1, INTS2, INTS3, INTS4, INTS5, INTS6, INTS7, INTS8, INTS9/RC74, INTS10, INTS11/CPSF3L, INTS12, INTS13, INTS14 and INTS15. The core complex associates with protein phosphatase 2A subunits PPP2CA and PPP2R1A, to form the Integrator-PP2A (INTAC) complex. Component of the SOSS complex, composed of SOSS-B (SOSS-B1/NABP2 or SOSS-B2/NABP1), SOSS-A/INTS3 and SOSS-C/INIP. SOSS complexes containing SOSS-B1/NABP2 are more abundant than complexes containing SOSS-B2/NABP1. Interacts with SOSS-B1/NABP2, SOSS-B2/NABP1 and SOSS-C/INIP; the interaction is direct. Interacts with NBN/NBS1.

It is found in the nucleus. The protein resides in the cytoplasm. Functionally, component of the integrator complex, a multiprotein complex that terminates RNA polymerase II (Pol II) transcription in the promoter-proximal region of genes. The integrator complex provides a quality checkpoint during transcription elongation by driving premature transcription termination of transcripts that are unfavorably configured for transcriptional elongation: the complex terminates transcription by (1) catalyzing dephosphorylation of the C-terminal domain (CTD) of Pol II subunit POLR2A/RPB1 and SUPT5H/SPT5, (2) degrading the exiting nascent RNA transcript via endonuclease activity and (3) promoting the release of Pol II from bound DNA. The integrator complex is also involved in terminating the synthesis of non-coding Pol II transcripts, such as enhancer RNAs (eRNAs), small nuclear RNAs (snRNAs), telomerase RNAs and long non-coding RNAs (lncRNAs). Within the integrator complex, INTS3 is involved in the post-termination step: INTS3 binds INTS7 in the open conformation of integrator complex and prevents the rebinding of Pol II to the integrator after termination cycle. Mediates recruitment of cytoplasmic dynein to the nuclear envelope, probably as component of the integrator complex. Component of the SOSS complex, a multiprotein complex that functions downstream of the MRN complex to promote DNA repair and G2/M checkpoint. The SOSS complex associates with single-stranded DNA at DNA lesions and influences diverse endpoints in the cellular DNA damage response including cell-cycle checkpoint activation, recombinational repair and maintenance of genomic stability. The SOSS complex is required for efficient homologous recombination-dependent repair of double-strand breaks (DSBs) and ATM-dependent signaling pathways. In the SOSS complex, it is required for the assembly of the complex and for stabilization of the complex at DNA damage sites. This is Integrator complex subunit 3 from Homo sapiens (Human).